Reading from the N-terminus, the 176-residue chain is Putative ribosomal protein eS10-like (176 aa).

A disordered region spans residues 104–176; it reads TLHRSRPETG…CGRGRGQPPQ (73 aa). The segment covering 108-139 has biased composition (basic and acidic residues); sequence SRPETGRPRPKGLEGKRPARLTRREADRDTYR.

It belongs to the eukaryotic ribosomal protein eS10 family.

This Homo sapiens (Human) protein is Putative ribosomal protein eS10-like (RPS10P5).